Reading from the N-terminus, the 403-residue chain is Acetyl-CoA acetyltransferase IB (403 aa).

Residue Cys91 is the Acyl-thioester intermediate of the active site. Residues His353 and Cys383 each act as proton acceptor in the active site. A Microbody targeting signal motif is present at residues 401–403 (AKL).

The protein belongs to the thiolase-like superfamily. Thiolase family. Multimeric.

It localises to the peroxisome. The catalysed reaction is 2 acetyl-CoA = acetoacetyl-CoA + CoA. The protein operates within metabolic intermediate biosynthesis; (R)-mevalonate biosynthesis; (R)-mevalonate from acetyl-CoA: step 1/3. The polypeptide is Acetyl-CoA acetyltransferase IB (PACTB) (Candida tropicalis (Yeast)).